The chain runs to 248 residues: MKIAAIIPSRYGSTRFAGKPLAPIAGIPMIQRVYDQVKQAICVTDIAVATDDRRIVEAVTRFGGNALMTSAACRSGTDRAAEAAKQMGLAPEDIVVNIQGDQPLIAPQTIDETLAPLLSDPDLGMTTAAFAIMDKQEITNPKDVKMVFDADGFALYFSRSPIPFARDKDTRFDTFKHLGIYAYTRRFLDIFTQLPNGVLEEIEKLEQLRALEHSHRIKTVVTRYDSPEVDIPEDIPRIEAMMASMAAD.

The protein belongs to the KdsB family.

It localises to the cytoplasm. The enzyme catalyses 3-deoxy-alpha-D-manno-oct-2-ulosonate + CTP = CMP-3-deoxy-beta-D-manno-octulosonate + diphosphate. Its pathway is nucleotide-sugar biosynthesis; CMP-3-deoxy-D-manno-octulosonate biosynthesis; CMP-3-deoxy-D-manno-octulosonate from 3-deoxy-D-manno-octulosonate and CTP: step 1/1. It functions in the pathway bacterial outer membrane biogenesis; lipopolysaccharide biosynthesis. In terms of biological role, activates KDO (a required 8-carbon sugar) for incorporation into bacterial lipopolysaccharide in Gram-negative bacteria. This chain is 3-deoxy-manno-octulosonate cytidylyltransferase, found in Desulfosudis oleivorans (strain DSM 6200 / JCM 39069 / Hxd3) (Desulfococcus oleovorans).